We begin with the raw amino-acid sequence, 806 residues long: Leucine--tRNA ligase (806 aa).

The 'HIGH' region signature appears at 38 to 48 (PYPSGEIHMGH). The short motif at 572–576 (KMSKS) is the 'KMSKS' region element. Lys575 is a binding site for ATP.

This sequence belongs to the class-I aminoacyl-tRNA synthetase family.

It is found in the cytoplasm. It carries out the reaction tRNA(Leu) + L-leucine + ATP = L-leucyl-tRNA(Leu) + AMP + diphosphate. This chain is Leucine--tRNA ligase, found in Helicobacter acinonychis (strain Sheeba).